Here is a 275-residue protein sequence, read N- to C-terminus: MWGSGELLVAWFLVLAADGTTEHVYRPSRRVCTVGISGGSISETFVQRVYQPYLTTCDGHRACSTYRTIYRTAYRRSPGVTPARPRYACCPGWKRTSGLPGACGAAICQPPCGNGGSCIRPGHCRCPVGWQGDTCQTDVDECSTGEASCPQRCVNTVGSYWCQGWEGQSPSADGTRCLSKEGPSPVAPNPTAGVDSMAREEVYRLQARVDVLEQKLQLVLAPLHSLASRSTEHGLQDPGSLLAHSFQQLDRIDSLSEQVSFLEEHLGSCSCKKDL.

Positions 1–21 (MWGSGELLVAWFLVLAADGTT) are cleaved as a signal peptide. An EMI domain is found at 28 to 105 (SRRVCTVGIS…TSGLPGACGA (78 aa)). Cystine bridges form between Cys-32–Cys-90, Cys-57–Cys-63, Cys-89–Cys-103, Cys-108–Cys-118, Cys-112–Cys-124, Cys-126–Cys-135, Cys-142–Cys-153, and Cys-149–Cys-162. The EGF-like 1 domain occupies 104 to 136 (GAAICQPPCGNGGSCIRPGHCRCPVGWQGDTCQ). The Cell attachment site signature appears at 131–133 (QGD). In terms of domain architecture, EGF-like 2; calcium-binding spans 138 to 178 (DVDECSTGEASCPQRCVNTVGSYWCQGWEGQSPSADGTRCL). The tract at residues 173–193 (DGTRCLSKEGPSPVAPNPTAG) is disordered. Residues 196-220 (SMAREEVYRLQARVDVLEQKLQLVL) are a coiled coil.

In terms of assembly, interacts with ITGAV/ITGB3 in an RGD-dependent manner, increasing endothelial cell's motility. Expressed specifically by endothelial cells of the highly vascularized organs heart, lung and kidney.

Its subcellular location is the secreted. It is found in the extracellular space. Functionally, regulates vascular tubulogenesis in vivo. Inhibits platelet-derived growth factor (PDGF)-BB-induced smooth muscle cell migration and promotes endothelial cell adhesion to the extracellular matrix and angiogenesis. This Mus musculus (Mouse) protein is Epidermal growth factor-like protein 7 (Egfl7).